A 425-amino-acid polypeptide reads, in one-letter code: MTNVMDVLRERGFIDAVTSEEIRQLTNQPIKVYCGFDPTADSLHLGNLVAIMGLAWFQRFGHTPVAIVGGATGMIGDPSGKNAERQLLDEKKIQLNLKGISKNLEAILDFNHPTAPAIILNNLDWFKNFTFISFLRDVGKLFRLSPMLAKDSVKTRLNSEEGMSFTEFCYQILQGYDFLHLFENYGVTVELGGSDQWGNITAGTDLIRKVHAKPAYGITFPLLTKSDGQKFGKSEKGAVWLSPDKLSSYEFYQHLIRVEDADVINLMRMLTFLDMGEIRHYEQMMKEADYVPRTAQKRLAEEITRLVHGEEGLKIAIKVTEGVAPGSQTSLNADILEKLAADMPSCEMKLENVLNKKLIDLLVETKLQTSKSEARRLLRNGGVYINNKKIEDENHIISVECLISSRLILLAAGKKNKMIIRLMEE.

Y33 contributes to the L-tyrosine binding site. The short motif at 38–47 (PTADSLHLGN) is the 'HIGH' region element. 2 residues coordinate L-tyrosine: Y170 and Q174. The short motif at 230-234 (KFGKS) is the 'KMSKS' region element. An ATP-binding site is contributed by K233. Residues 356 to 422 (KKLIDLLVET…GKKNKMIIRL (67 aa)) form the S4 RNA-binding domain.

Belongs to the class-I aminoacyl-tRNA synthetase family. TyrS type 1 subfamily. As to quaternary structure, homodimer.

It localises to the cytoplasm. The catalysed reaction is tRNA(Tyr) + L-tyrosine + ATP = L-tyrosyl-tRNA(Tyr) + AMP + diphosphate + H(+). Its function is as follows. Catalyzes the attachment of tyrosine to tRNA(Tyr) in a two-step reaction: tyrosine is first activated by ATP to form Tyr-AMP and then transferred to the acceptor end of tRNA(Tyr). In Protochlamydia amoebophila (strain UWE25), this protein is Tyrosine--tRNA ligase.